The following is a 151-amino-acid chain: Deoxyuridine 5'-triphosphate nucleotidohydrolase (151 aa).

Substrate-binding positions include 70–72 (RSG), asparagine 83, 87–89 (LID), and methionine 97.

This sequence belongs to the dUTPase family. Mg(2+) is required as a cofactor.

It catalyses the reaction dUTP + H2O = dUMP + diphosphate + H(+). It functions in the pathway pyrimidine metabolism; dUMP biosynthesis; dUMP from dCTP (dUTP route): step 2/2. This enzyme is involved in nucleotide metabolism: it produces dUMP, the immediate precursor of thymidine nucleotides and it decreases the intracellular concentration of dUTP so that uracil cannot be incorporated into DNA. The polypeptide is Deoxyuridine 5'-triphosphate nucleotidohydrolase (Actinobacillus pleuropneumoniae serotype 7 (strain AP76)).